A 190-amino-acid polypeptide reads, in one-letter code: 7-methyl-GTP pyrophosphatase (190 aa).

Catalysis depends on Asp69, which acts as the Proton acceptor.

Belongs to the Maf family. YceF subfamily. A divalent metal cation serves as cofactor.

It localises to the cytoplasm. The catalysed reaction is N(7)-methyl-GTP + H2O = N(7)-methyl-GMP + diphosphate + H(+). Nucleoside triphosphate pyrophosphatase that hydrolyzes 7-methyl-GTP (m(7)GTP). May have a dual role in cell division arrest and in preventing the incorporation of modified nucleotides into cellular nucleic acids. This is 7-methyl-GTP pyrophosphatase from Xanthomonas axonopodis pv. citri (strain 306).